Reading from the N-terminus, the 130-residue chain is Small ribosomal subunit protein uS8 (130 aa).

Belongs to the universal ribosomal protein uS8 family. As to quaternary structure, part of the 30S ribosomal subunit.

One of the primary rRNA binding proteins, it binds directly to 16S rRNA central domain where it helps coordinate assembly of the platform of the 30S subunit. The polypeptide is Small ribosomal subunit protein uS8 (Korarchaeum cryptofilum (strain OPF8)).